We begin with the raw amino-acid sequence, 202 residues long: NAD(P)H-quinone oxidoreductase subunit I (202 aa).

4Fe-4S ferredoxin-type domains are found at residues 55–84 (GRIHYEFDKCIACEVCVRVCPINLPVVDWV) and 95–124 (KNYSIDFGACIFCGNCVEYCPTNCLSMTEE). Cysteine 64, cysteine 67, cysteine 70, cysteine 74, cysteine 104, cysteine 107, cysteine 110, and cysteine 114 together coordinate [4Fe-4S] cluster. Over residues 168–187 (EYDPHVVPSDRPRAGQRPEE) the composition is skewed to basic and acidic residues. Residues 168-202 (EYDPHVVPSDRPRAGQRPEELVDQYKQAAAANEEN) form a disordered region.

The protein belongs to the complex I 23 kDa subunit family. NDH-1 is composed of at least 11 different subunits. The cofactor is [4Fe-4S] cluster.

It is found in the cellular thylakoid membrane. It carries out the reaction a plastoquinone + NADH + (n+1) H(+)(in) = a plastoquinol + NAD(+) + n H(+)(out). It catalyses the reaction a plastoquinone + NADPH + (n+1) H(+)(in) = a plastoquinol + NADP(+) + n H(+)(out). Its function is as follows. NDH-1 shuttles electrons from an unknown electron donor, via FMN and iron-sulfur (Fe-S) centers, to quinones in the respiratory and/or the photosynthetic chain. The immediate electron acceptor for the enzyme in this species is believed to be plastoquinone. Couples the redox reaction to proton translocation, and thus conserves the redox energy in a proton gradient. The sequence is that of NAD(P)H-quinone oxidoreductase subunit I from Synechococcus elongatus (strain ATCC 33912 / PCC 7942 / FACHB-805) (Anacystis nidulans R2).